Consider the following 417-residue polypeptide: NADH-quinone oxidoreductase subunit D (417 aa).

Belongs to the complex I 49 kDa subunit family. As to quaternary structure, NDH-1 is composed of 14 different subunits. Subunits NuoB, C, D, E, F, and G constitute the peripheral sector of the complex.

Its subcellular location is the cell membrane. It carries out the reaction a quinone + NADH + 5 H(+)(in) = a quinol + NAD(+) + 4 H(+)(out). Its function is as follows. NDH-1 shuttles electrons from NADH, via FMN and iron-sulfur (Fe-S) centers, to quinones in the respiratory chain. The immediate electron acceptor for the enzyme in this species is believed to be ubiquinone. Couples the redox reaction to proton translocation (for every two electrons transferred, four hydrogen ions are translocated across the cytoplasmic membrane), and thus conserves the redox energy in a proton gradient. The chain is NADH-quinone oxidoreductase subunit D from Polynucleobacter asymbioticus (strain DSM 18221 / CIP 109841 / QLW-P1DMWA-1) (Polynucleobacter necessarius subsp. asymbioticus).